A 787-amino-acid chain; its full sequence is DNA ligase (787 aa).

Residues 32–36 (DVEYD), 81–82 (SL), and Glu-121 contribute to the NAD(+) site. Lys-123 functions as the N6-AMP-lysine intermediate in the catalytic mechanism. NAD(+) contacts are provided by Arg-144, Glu-181, Lys-297, and Lys-321. Zn(2+) contacts are provided by Cys-415, Cys-418, Cys-445, and Cys-451. The BRCT domain occupies 703 to 787 (VEGLPLAGQT…RLIELGVAVD (85 aa)).

It belongs to the NAD-dependent DNA ligase family. LigA subfamily. Mg(2+) is required as a cofactor. Requires Mn(2+) as cofactor.

It catalyses the reaction NAD(+) + (deoxyribonucleotide)n-3'-hydroxyl + 5'-phospho-(deoxyribonucleotide)m = (deoxyribonucleotide)n+m + AMP + beta-nicotinamide D-nucleotide.. DNA ligase that catalyzes the formation of phosphodiester linkages between 5'-phosphoryl and 3'-hydroxyl groups in double-stranded DNA using NAD as a coenzyme and as the energy source for the reaction. It is essential for DNA replication and repair of damaged DNA. This Pseudomonas syringae pv. syringae (strain B728a) protein is DNA ligase.